Reading from the N-terminus, the 316-residue chain is Ribose-phosphate pyrophosphokinase (316 aa).

Residues 39 to 41 (DGE) and 98 to 99 (RQ) each bind ATP. Mg(2+) is bound by residues H133 and D172. Residue K195 is part of the active site. Residues R197, D221, and 225–229 (DTGGT) contribute to the D-ribose 5-phosphate site.

The protein belongs to the ribose-phosphate pyrophosphokinase family. Class I subfamily. In terms of assembly, homohexamer. Requires Mg(2+) as cofactor.

The protein localises to the cytoplasm. The enzyme catalyses D-ribose 5-phosphate + ATP = 5-phospho-alpha-D-ribose 1-diphosphate + AMP + H(+). It participates in metabolic intermediate biosynthesis; 5-phospho-alpha-D-ribose 1-diphosphate biosynthesis; 5-phospho-alpha-D-ribose 1-diphosphate from D-ribose 5-phosphate (route I): step 1/1. Involved in the biosynthesis of the central metabolite phospho-alpha-D-ribosyl-1-pyrophosphate (PRPP) via the transfer of pyrophosphoryl group from ATP to 1-hydroxyl of ribose-5-phosphate (Rib-5-P). This chain is Ribose-phosphate pyrophosphokinase, found in Ralstonia nicotianae (strain ATCC BAA-1114 / GMI1000) (Ralstonia solanacearum).